The following is a 445-amino-acid chain: Ribosomal protein uS12 methylthiotransferase RimO (445 aa).

Residues 4-119 form the MTTase N-terminal domain; that stretch reads YKVGMVSLGC…INEAIMNFIN (116 aa). 6 residues coordinate [4Fe-4S] cluster: cysteine 13, cysteine 48, cysteine 82, cysteine 157, cysteine 161, and cysteine 164. The 231-residue stretch at 143–373 folds into the Radical SAM core domain; sequence TTDKATAYLR…MLLQKEVSEE (231 aa). The TRAM domain occupies 376–441; sequence KNKVGREYDV…EYDLVGVVCN (66 aa).

This sequence belongs to the methylthiotransferase family. RimO subfamily. The cofactor is [4Fe-4S] cluster.

Its subcellular location is the cytoplasm. It catalyses the reaction L-aspartate(89)-[ribosomal protein uS12]-hydrogen + (sulfur carrier)-SH + AH2 + 2 S-adenosyl-L-methionine = 3-methylsulfanyl-L-aspartate(89)-[ribosomal protein uS12]-hydrogen + (sulfur carrier)-H + 5'-deoxyadenosine + L-methionine + A + S-adenosyl-L-homocysteine + 2 H(+). Its function is as follows. Catalyzes the methylthiolation of an aspartic acid residue of ribosomal protein uS12. The sequence is that of Ribosomal protein uS12 methylthiotransferase RimO from Clostridium perfringens (strain 13 / Type A).